The chain runs to 272 residues: Shikimate dehydrogenase (NADP(+)) (272 aa).

Residues S14–S16 and T61 contribute to the shikimate site. The Proton acceptor role is filled by K65. E77 is an NADP(+) binding site. 2 residues coordinate shikimate: N86 and D102. NADP(+) is bound by residues G126–A130, N149–R154, and M213. A shikimate-binding site is contributed by Y215. G237 contacts NADP(+).

The protein belongs to the shikimate dehydrogenase family. As to quaternary structure, homodimer.

The catalysed reaction is shikimate + NADP(+) = 3-dehydroshikimate + NADPH + H(+). It functions in the pathway metabolic intermediate biosynthesis; chorismate biosynthesis; chorismate from D-erythrose 4-phosphate and phosphoenolpyruvate: step 4/7. In terms of biological role, involved in the biosynthesis of the chorismate, which leads to the biosynthesis of aromatic amino acids. Catalyzes the reversible NADPH linked reduction of 3-dehydroshikimate (DHSA) to yield shikimate (SA). This Citrobacter koseri (strain ATCC BAA-895 / CDC 4225-83 / SGSC4696) protein is Shikimate dehydrogenase (NADP(+)).